Here is a 248-residue protein sequence, read N- to C-terminus: 2,3-bisphosphoglycerate-dependent phosphoglycerate mutase (248 aa).

Substrate contacts are provided by residues 8 to 15 (RHGESVWN), 21 to 22 (TG), Arg60, 87 to 90 (ERHY), Lys98, 114 to 115 (RR), and 183 to 184 (GN). His9 acts as the Tele-phosphohistidine intermediate in catalysis. The active-site Proton donor/acceptor is the Glu87.

Belongs to the phosphoglycerate mutase family. BPG-dependent PGAM subfamily.

It catalyses the reaction (2R)-2-phosphoglycerate = (2R)-3-phosphoglycerate. It functions in the pathway carbohydrate degradation; glycolysis; pyruvate from D-glyceraldehyde 3-phosphate: step 3/5. In terms of biological role, catalyzes the interconversion of 2-phosphoglycerate and 3-phosphoglycerate. The sequence is that of 2,3-bisphosphoglycerate-dependent phosphoglycerate mutase from Brachyspira hyodysenteriae (strain ATCC 49526 / WA1).